Reading from the N-terminus, the 354-residue chain is Probable DNA repair protein RAD51 homolog 4 (354 aa).

Residue 115–122 (GNTSCGKT) participates in ATP binding.

The protein belongs to the RecA family. RAD51 subfamily.

It is found in the nucleus. Its function is as follows. Involved in the homologous recombination repair (HRR) pathway of double-stranded DNA breaks arising during DNA replication or induced by DNA-damaging agents. This is Probable DNA repair protein RAD51 homolog 4 (rad51d) from Dictyostelium discoideum (Social amoeba).